The following is a 46-amino-acid chain: Diuretic hormone (46 aa).

Isoleucine 46 bears the Isoleucine amide mark.

The protein belongs to the sauvagine/corticotropin-releasing factor/urotensin I family.

It is found in the secreted. Functionally, regulation of fluid secretion. Stimulates primary urine secretion by Malpighian tubules and causes a dose-dependent stimulation of cAMP levels in the tubules. The protein is Diuretic hormone of Periplaneta americana (American cockroach).